The following is a 781-amino-acid chain: Catenin beta-1 (781 aa).

Residue alanine 2 is modified to N-acetylalanine. Residues 2–23 are interaction with VCL; sequence ATQADLMELDMAMEPDRKAAVS. Residue serine 23 is modified to Phosphoserine; by GSK3-beta; alternate. Residue serine 23 is glycosylated (O-linked (GlcNAc) serine; alternate). Serine 29 carries the post-translational modification Phosphoserine; by GSK3-beta. A phosphoserine; by GSK3-beta and HIPK2 mark is found at serine 33 and serine 37. The tract at residues 34–56 is disordered; that stretch reads GIHSGATTTAPSLSGKGNPEEED. Threonine 41 bears the Phosphothreonine; by GSK3-beta mark. Serine 45 bears the Phosphoserine mark. Lysine 49 is modified (N6-acetyllysine). Position 64 is a phosphotyrosine; by PTK6 (tyrosine 64). At tyrosine 142 the chain carries Phosphotyrosine; by FYN and PTK6. ARM repeat units follow at residues 151–191, 193–234, 235–276, 277–318, 319–360, 361–389, 400–441, 442–484, 489–530, 531–571, 594–636, and 637–666; these read RAIP…IMRS, QMVS…IFKS, GGIP…VRLA, GGLQ…ILAS, GGPQ…IVEA, GGMQ…RNLS, GLLG…VCQV, GGIE…AQNA, YGLP…LREQ, GAIP…EIVE, NTIP…AEGA, and TAPL…SEDK. Positions 156 to 178 are interaction with BCL9; it reads LTKLLNDEDQVVVNKAAVMVHQL. Serine 191 carries the post-translational modification Phosphoserine; by CDK5. Serine 246 is subject to Phosphoserine; by CDK5. 2 positions are modified to phosphotyrosine: tyrosine 331 and tyrosine 333. Residue serine 552 is modified to Phosphoserine; by AMPK. The residue at position 556 (threonine 556) is a Phosphothreonine. Cysteine 619 is modified (S-nitrosocysteine). Serine 675 is subject to Phosphoserine. Residues 705 to 781 are disordered; it reads EPLGYRQDDP…NQLAWFDTDL (77 aa). Residues 734-745 show a composition bias toward basic and acidic residues; sequence MMEHEMGGHHPG. Residues 772 to 781 are interaction with SCRIB; the sequence is NQLAWFDTDL.

It belongs to the beta-catenin family. In terms of assembly, two separate complex-associated pools are found in the cytoplasm. The majority is present as component of an E-cadherin/ catenin adhesion complex composed of at least E-cadherin/CDH1 and beta-catenin/CTNNB1, and possibly alpha-catenin/CTNNA1; the complex is located to adherens junctions. The stable association of CTNNA1 is controversial as CTNNA1 was shown not to bind to F-actin when assembled in the complex. Alternatively, the CTNNA1-containing complex may be linked to F-actin by other proteins such as LIMA1. Another cytoplasmic pool is part of a large complex containing AXIN1, AXIN2, APC, CSNK1A1 and GSK3B that promotes phosphorylation on N-terminal Ser and Thr residues and ubiquitination of CTNNB1 via BTRC and its subsequent degradation by the proteasome. Wnt-dependent activation of DVL antagonizes the action of GSK3B. When GSK3B activity is inhibited the complex dissociates, CTNNB1 is dephosphorylated and is no longer targeted for destruction. The stabilized protein translocates to the nucleus, where it binds TCF/LEF-1 family members, BCL9, BCL9L and possibly also RUVBL1 and CHD8. Binds CTNNBIP and EP300. CTNNB1 forms a ternary complex with LEF1 and EP300 that is disrupted by CTNNBIP1 binding. Interacts with TAX1BP3 (via the PDZ domain); this interaction inhibits the transcriptional activity of CTNNB1. Interacts with AJAP1, BAIAP1, CARM1, CTNNA3, CXADR and PCDH11Y. Binds NHERF1. Interacts with GLIS2 and SLC30A9. Interacts with XIRP1 and MUC1. Interacts with PTPRU (via the cytoplasmic juxtamembrane domain) and with EMD. Interacts with SCRIB. Interacts with TNIK. Interacts with SESTD1 and TRPC4. Interacts directly with AXIN1; the interaction is regulated by CDK2 phosphorylation of AXIN1. Interacts with CAV1. Interacts with TRPV4. The TRPV4 and CTNNB1 complex can interact with CDH1. Interacts with VCL. Interacts with PTPRJ. Interacts with PKT7. Interacts with FAT1 (via the cytoplasmic domain). Interacts with NANOS1 and NDRG2. Interacts with NEK2, CDK2 and CDK5. Interacts with PTK6. Interacts with SOX7; this interaction may lead to proteasomal degradation of active CTNNB1 and thus inhibition of Wnt/beta-catenin-stimulated transcription. Identified in a complex with HINT1 and MITF. Interacts with FHIT. The CTNNB1 and TCF4 complex interacts with PML. Interacts with FERMT2. Identified in a complex with TCF4 and FERMT2. Interacts with RORA. May interact with P-cadherin/CDH3. Interacts with RAPGEF2. Interacts with RNF220. Interacts with CTNND2. Interacts (via the C-terminal region) with CBY1. The complex composed, at least, of APC, CTNNB1 and GSK3B interacts with JPT1; the interaction requires the inactive form of GSK3B (phosphorylated at 'Ser-9'). Interacts with DLG5. Interacts with FAM53B; promoting translocation to the nucleus. Interacts with TMEM170B. Interacts with AHI1. Interacts with GID8. Component of an cadherin:catenin adhesion complex composed of at least of CDH26, beta-catenin/CTNNB1, alpha-catenin/CTNNA1 and p120 catenin/CTNND1. Forms a complex comprising APPL1, RUVBL2, APPL2, HDAC1 and HDAC2. Interacts with IRF2BPL; mediates the ubiquitination and degradation of CTNNB1. Interacts with LMBR1L and AMFR. Interacts with LMBR1L. Interacts with SOX30; prevents interaction of CTNNB1 with TCF7L2/TCF4 and leads to inhibition of Wnt signaling. Interacts with SOX9; inhibiting CTNNB1 activity by competing with the binding sites of TCF/LEF within CTNNB1, thereby inhibiting the Wnt signaling. Interacts with SPN/CD43 cytoplasmic tail. Interacts (when phosphorylated at Tyr-333) with isoform M2 of PKM (PKM2); promoting transcription activation. Interacts with PKP2 (via HEAD domain). Interacts with CDH1. Interacts (when unphosphorylated) with FLYWCH1, perhaps preventing interaction of CTNNB1 with TCF4, and thereby regulating transcription activation; phosphorylation of CTNNB1 may inhibit the interaction. Interacts (via the central armadillo domains) with probable transcriptional regulator ADNP (via N-terminal region); interaction is direct and stabilizes CTNNB1 by modulating its phosphorylation by glycogen synthase kinase-3 beta GSK3B. Interacts with NR5A2. Interacts with DSG2; the interaction promotes localization of CTNNB1 at cell junctions thus reducing its nuclear localization and subsequent transcription of CTNNB1/TCF-target genes. In terms of processing, phosphorylation by GSK3B requires prior phosphorylation of Ser-45 by another kinase. Phosphorylation proceeds then from Thr-41 to Ser-33. Phosphorylated by NEK2. EGF stimulates tyrosine phosphorylation. Phosphorylated on Ser-33 and Ser-37 by HIPK2. This phosphorylation triggers proteasomal degradation. Phosphorylation at Ser-552 by AMPK promotes stabilization of the protein, enhancing TCF/LEF-mediated transcription. Phosphorylation on Ser-191 and Ser-246 by CDK5. Phosphorylation by CDK2 regulates insulin internalization. Phosphorylation by PTK6 at Tyr-64, Tyr-142, Tyr-331 and/or Tyr-333 with the predominant site at Tyr-64 is not essential for inhibition of transcriptional activity. Phosphorylation by SRC at Tyr-333 promotes interaction with isoform M2 of PKM (PKM2); promoting transcription activation. Post-translationally, ubiquitinated by the SCF(BTRC) E3 ligase complex when phosphorylated by GSK3B, leading to its degradation. Ubiquitinated by a E3 ubiquitin ligase complex containing UBE2D1, SIAH1, CACYBP/SIP, SKP1, APC and TBL1X, leading to its subsequent proteasomal degradation. Ubiquitinated and degraded following interaction with SOX9. Ubiquitinated via 'Lys-11'- and 'Lys-29'-linked ubiquitin chains by UBR5, leading to its stabilization. S-nitrosylation at Cys-619 within adherens junctions promotes VEGF-induced, NO-dependent endothelial cell permeability by disrupting interaction with E-cadherin, thus mediating disassembly adherens junctions. In terms of processing, O-glycosylation at Ser-23 decreases nuclear localization and transcriptional activity, and increases localization to the plasma membrane and interaction with E-cadherin CDH1. Post-translationally, deacetylated at Lys-49 by SIRT1.

Its subcellular location is the cytoplasm. It is found in the nucleus. It localises to the cytoskeleton. The protein localises to the cell junction. The protein resides in the adherens junction. Its subcellular location is the cell membrane. It is found in the microtubule organizing center. It localises to the centrosome. The protein localises to the spindle pole. The protein resides in the synapse. Its subcellular location is the cilium basal body. Functionally, key downstream component of the canonical Wnt signaling pathway. In the absence of Wnt, forms a complex with AXIN1, AXIN2, APC, CSNK1A1 and GSK3B that promotes phosphorylation on N-terminal Ser and Thr residues and ubiquitination of CTNNB1 via BTRC and its subsequent degradation by the proteasome. In the presence of Wnt ligand, CTNNB1 is not ubiquitinated and accumulates in the nucleus, where it acts as a coactivator for transcription factors of the TCF/LEF family, leading to activate Wnt responsive genes. Also acts as a coactivator for other transcription factors, such as NR5A2. Promotes epithelial to mesenchymal transition/mesenchymal to epithelial transition (EMT/MET) via driving transcription of CTNNB1/TCF-target genes. Involved in the regulation of cell adhesion, as component of an E-cadherin:catenin adhesion complex. Acts as a negative regulator of centrosome cohesion. Involved in the CDK2/PTPN6/CTNNB1/CEACAM1 pathway of insulin internalization. Blocks anoikis of malignant kidney and intestinal epithelial cells and promotes their anchorage-independent growth by down-regulating DAPK2. Disrupts PML function and PML-NB formation by inhibiting RANBP2-mediated sumoylation of PML. Promotes neurogenesis by maintaining sympathetic neuroblasts within the cell cycle. Involved in chondrocyte differentiation via interaction with SOX9: SOX9-binding competes with the binding sites of TCF/LEF within CTNNB1, thereby inhibiting the Wnt signaling. Acts as a positive regulator of odontoblast differentiation during mesenchymal tooth germ formation, via promoting the transcription of differentiation factors such as LEF1, BMP2 and BMP4. Activity is repressed in a MSX1-mediated manner at the bell stage of mesenchymal tooth germ formation which prevents premature differentiation of odontoblasts. The chain is Catenin beta-1 from Bos taurus (Bovine).